We begin with the raw amino-acid sequence, 101 residues long: NAD(P)H-quinone oxidoreductase subunit 4L, chloroplastic (101 aa).

3 helical membrane-spanning segments follow: residues 2–22, 32–52, and 61–81; these read MLEH…YGLI, MCLE…SDLF, and IFSI…LAIV.

This sequence belongs to the complex I subunit 4L family. In terms of assembly, NDH is composed of at least 16 different subunits, 5 of which are encoded in the nucleus.

The protein resides in the plastid. It is found in the chloroplast thylakoid membrane. It carries out the reaction a plastoquinone + NADH + (n+1) H(+)(in) = a plastoquinol + NAD(+) + n H(+)(out). It catalyses the reaction a plastoquinone + NADPH + (n+1) H(+)(in) = a plastoquinol + NADP(+) + n H(+)(out). Functionally, NDH shuttles electrons from NAD(P)H:plastoquinone, via FMN and iron-sulfur (Fe-S) centers, to quinones in the photosynthetic chain and possibly in a chloroplast respiratory chain. The immediate electron acceptor for the enzyme in this species is believed to be plastoquinone. Couples the redox reaction to proton translocation, and thus conserves the redox energy in a proton gradient. This chain is NAD(P)H-quinone oxidoreductase subunit 4L, chloroplastic, found in Nandina domestica (Heavenly bamboo).